The sequence spans 566 residues: 4-hydroxy-7-methoxy-3-oxo-3,4-dihydro-2H-1,4-benzoxazin-2-yl glucoside beta-D-glucosidase 1, chloroplastic (566 aa).

The N-terminal 54 residues, 1-54 (MAPLLAAAMNHAAAHPGLRSHLVGPNNESFSRHHLPSSSPQSSKRRCNLSFTTR), are a transit peptide targeting the chloroplast. The disordered stretch occupies residues 17–47 (GLRSHLVGPNNESFSRHHLPSSSPQSSKRRC). A beta-D-glucoside contacts are provided by residues glutamine 92, histidine 196, and 244-245 (NE). Glutamate 245 acts as the Proton donor in catalysis. Cysteine 264 and cysteine 270 are disulfide-bonded. Residues 325–361 (SFLDKQAEERSWDINLGWFLEPVVRGDYPFSMRSLAR) are dimerization. Position 387 (tyrosine 387) interacts with a beta-D-glucoside. Dimerization regions lie at residues 394-405 (NIDISPNYSPVL) and 450-453 (KYGN). Residues glutamate 460, tryptophan 511, 518-519 (EW), and tyrosine 527 each bind a beta-D-glucoside. Glutamate 460 acts as the Nucleophile in catalysis.

It belongs to the glycosyl hydrolase 1 family. In terms of assembly, homo- and heterodimer. As to expression, expressed in all seedling parts. Most abundant in the coleoptile.

It localises to the plastid. The protein resides in the chloroplast. It carries out the reaction Hydrolysis of terminal, non-reducing beta-D-glucosyl residues with release of beta-D-glucose.. The enzyme catalyses DIMBOA beta-D-glucoside + H2O = DIMBOA + D-glucose. It catalyses the reaction DIBOA beta-D-glucoside + H2O = DIBOA + D-glucose. Its activity is regulated as follows. Reversibly inhibited by micromolar concentrations of Hg(2+) or Ag(+), but irreversibly inhibited by alkylation in presence of urea. Competitive inhibition by p-nitrophenyl beta-D-thioglucoside (pNPTGlc), glucotetrazole, and para-hydroxy-S-mandelonitrile beta-glucoside (dhurrin). Functionally, is implicated in many functions such as ABA metabolism, hydrolysis of conjugated gibberellins, conversion of storage forms of cytokinins to active forms. Also acts in defense of young plant parts against pests via the production of hydroxamic acids from hydroxamic acid glucosides. Enzymatic activity is highly correlated with plant growth. The preferred substrate is DIMBOA-beta-D-glucoside. Hydrolyzes the chromogenic substrate 6-bromo-2-naphthyl-beta-D-glucoside (6BNGlc) and various artificial aryl beta-glucosides. No activity with cellobiose, arbutin, gentiobiose, linamarin or dhurrin as substrates. This chain is 4-hydroxy-7-methoxy-3-oxo-3,4-dihydro-2H-1,4-benzoxazin-2-yl glucoside beta-D-glucosidase 1, chloroplastic (GLU1), found in Zea mays (Maize).